Consider the following 159-residue polypeptide: Putative pre-16S rRNA nuclease (159 aa).

This sequence belongs to the YqgF nuclease family.

The protein resides in the cytoplasm. Functionally, could be a nuclease involved in processing of the 5'-end of pre-16S rRNA. The sequence is that of Putative pre-16S rRNA nuclease from Bartonella quintana (strain Toulouse) (Rochalimaea quintana).